We begin with the raw amino-acid sequence, 44 residues long: Cytochrome b559 subunit beta (44 aa).

Residues Trp-19–Ser-35 traverse the membrane as a helical segment. Heme is bound at residue His-23.

The protein belongs to the PsbE/PsbF family. In terms of assembly, heterodimer of an alpha subunit and a beta subunit. PSII is composed of 1 copy each of membrane proteins PsbA, PsbB, PsbC, PsbD, PsbE, PsbF, PsbH, PsbI, PsbJ, PsbK, PsbL, PsbM, PsbT, PsbX, PsbY, PsbZ, Psb30/Ycf12, at least 3 peripheral proteins of the oxygen-evolving complex and a large number of cofactors. It forms dimeric complexes. Heme b serves as cofactor.

The protein resides in the plastid. Its subcellular location is the chloroplast thylakoid membrane. Its function is as follows. This b-type cytochrome is tightly associated with the reaction center of photosystem II (PSII). PSII is a light-driven water:plastoquinone oxidoreductase that uses light energy to abstract electrons from H(2)O, generating O(2) and a proton gradient subsequently used for ATP formation. It consists of a core antenna complex that captures photons, and an electron transfer chain that converts photonic excitation into a charge separation. This is Cytochrome b559 subunit beta from Tetradesmus obliquus (Green alga).